Here is a 155-residue protein sequence, read N- to C-terminus: Cyanate hydratase (155 aa).

Active-site residues include R101, E104, and S127.

The protein belongs to the cyanase family.

The enzyme catalyses cyanate + hydrogencarbonate + 3 H(+) = NH4(+) + 2 CO2. In terms of biological role, catalyzes the reaction of cyanate with bicarbonate to produce ammonia and carbon dioxide. The sequence is that of Cyanate hydratase from Coccidioides posadasii (strain C735) (Valley fever fungus).